The chain runs to 133 residues: Ribosome-binding factor A (133 aa).

This sequence belongs to the RbfA family. As to quaternary structure, monomer. Binds 30S ribosomal subunits, but not 50S ribosomal subunits or 70S ribosomes.

The protein localises to the cytoplasm. In terms of biological role, one of several proteins that assist in the late maturation steps of the functional core of the 30S ribosomal subunit. Associates with free 30S ribosomal subunits (but not with 30S subunits that are part of 70S ribosomes or polysomes). Required for efficient processing of 16S rRNA. May interact with the 5'-terminal helix region of 16S rRNA. The chain is Ribosome-binding factor A from Psychromonas ingrahamii (strain DSM 17664 / CCUG 51855 / 37).